The primary structure comprises 247 residues: UDP-2,3-diacylglucosamine hydrolase (247 aa).

The Mn(2+) site is built by Asp8, His10, Asp41, Asn79, and His115. Residue 79-80 (NH) participates in substrate binding. Substrate contacts are provided by Asp123, Lys165, Lys168, and His196. Residues His196 and His198 each contribute to the Mn(2+) site.

It belongs to the LpxH family. Requires Mn(2+) as cofactor.

Its subcellular location is the cell inner membrane. The catalysed reaction is UDP-2-N,3-O-bis[(3R)-3-hydroxytetradecanoyl]-alpha-D-glucosamine + H2O = 2-N,3-O-bis[(3R)-3-hydroxytetradecanoyl]-alpha-D-glucosaminyl 1-phosphate + UMP + 2 H(+). It participates in glycolipid biosynthesis; lipid IV(A) biosynthesis; lipid IV(A) from (3R)-3-hydroxytetradecanoyl-[acyl-carrier-protein] and UDP-N-acetyl-alpha-D-glucosamine: step 4/6. In terms of biological role, hydrolyzes the pyrophosphate bond of UDP-2,3-diacylglucosamine to yield 2,3-diacylglucosamine 1-phosphate (lipid X) and UMP by catalyzing the attack of water at the alpha-P atom. Involved in the biosynthesis of lipid A, a phosphorylated glycolipid that anchors the lipopolysaccharide to the outer membrane of the cell. The chain is UDP-2,3-diacylglucosamine hydrolase from Blochmanniella floridana.